Consider the following 122-residue polypeptide: Large ribosomal subunit protein bL12 (122 aa).

It belongs to the bacterial ribosomal protein bL12 family. In terms of assembly, homodimer. Part of the ribosomal stalk of the 50S ribosomal subunit. Forms a multimeric L10(L12)X complex, where L10 forms an elongated spine to which 2 to 4 L12 dimers bind in a sequential fashion. Binds GTP-bound translation factors.

Its function is as follows. Forms part of the ribosomal stalk which helps the ribosome interact with GTP-bound translation factors. Is thus essential for accurate translation. The protein is Large ribosomal subunit protein bL12 of Sulfurimonas denitrificans (strain ATCC 33889 / DSM 1251) (Thiomicrospira denitrificans (strain ATCC 33889 / DSM 1251)).